Consider the following 249-residue polypeptide: tRNA (guanine-N(7)-)-methyltransferase (249 aa).

4 residues coordinate S-adenosyl-L-methionine: glutamate 80, glutamate 105, aspartate 132, and aspartate 155. Aspartate 155 is an active-site residue. Substrate is bound by residues lysine 159, aspartate 191, and 228 to 231 (TKFE).

Belongs to the class I-like SAM-binding methyltransferase superfamily. TrmB family.

It carries out the reaction guanosine(46) in tRNA + S-adenosyl-L-methionine = N(7)-methylguanosine(46) in tRNA + S-adenosyl-L-homocysteine. Its pathway is tRNA modification; N(7)-methylguanine-tRNA biosynthesis. Its function is as follows. Catalyzes the formation of N(7)-methylguanine at position 46 (m7G46) in tRNA. This chain is tRNA (guanine-N(7)-)-methyltransferase, found in Mannheimia succiniciproducens (strain KCTC 0769BP / MBEL55E).